Reading from the N-terminus, the 225-residue chain is MRAAVAHRILLSLALFAVLCRCDPDLLFDYCVADTAAATAAGAFHLNGLACIDPALARADHFATSALSRATNPAATLYGFNATLTSPAASLPGANAQGLAMARIDLAPGGMAPPHSHPRASEAALVLSGSVLVGFADTSYRLYTQLLRAGEAFVFPRAMVHFLYNMDTAAPAVVLSGLNSQSPGAQLVPFSAFRTEPRLPDEVLKKAFKITGQDVQRIQKHLGGL.

An N-terminal signal peptide occupies residues 1–22; it reads MRAAVAHRILLSLALFAVLCRC. Cysteines 31 and 51 form a disulfide. The Cupin type-1 domain maps to 65-216; sequence SALSRATNPA…AFKITGQDVQ (152 aa). Asn-81 carries an N-linked (GlcNAc...) asparagine glycan. 4 residues coordinate Mn(2+): His-115, His-117, Glu-122, and His-161.

The protein belongs to the germin family. In terms of assembly, oligomer (believed to be a pentamer but probably hexamer).

The protein resides in the secreted. It localises to the extracellular space. Its subcellular location is the apoplast. May play a role in plant defense. Probably has no oxalate oxidase activity even if the active site is conserved. In Oryza sativa subsp. japonica (Rice), this protein is Germin-like protein 3-1.